Reading from the N-terminus, the 297-residue chain is Giardin subunit alpha-6 (297 aa).

Annexin repeat units lie at residues 3 to 72 (TTVQ…AYLW), 74 to 146 (KPGD…HWIL), 153 to 222 (FDID…AAHY), and 226 to 295 (HPAR…ILWR).

The protein belongs to the annexin family. Giardin subunit alpha subfamily.

The protein localises to the cytoplasm. The protein resides in the cytoskeleton. In terms of biological role, giardins are involved in parasite attachment to the intestinal mucosa and in the cytoskeletal disassembly and reassembly that marks the transition from infectious trophozoite to transmissible cyst. They may interact with other cytoskeletal proteins such as microtubules in the microribbons or crossbridges, to maintain the integrity of the ventral disk. This is Giardin subunit alpha-6 from Giardia intestinalis (Giardia lamblia).